The primary structure comprises 619 residues: 1-deoxy-D-xylulose-5-phosphate synthase (619 aa).

Residues His-74 and 115–117 contribute to the thiamine diphosphate site; that span reads GHS. Residue Asp-146 participates in Mg(2+) binding. Residues 147–148, Asn-175, and Tyr-285 each bind thiamine diphosphate; that span reads GA. Residue Asn-175 coordinates Mg(2+). Positions 289–312 are disordered; it reads EKSPSKYHAVPPRANEKEKPSKPC. The segment covering 302–312 has biased composition (basic and acidic residues); the sequence is ANEKEKPSKPC. Glu-365 lines the thiamine diphosphate pocket.

Belongs to the transketolase family. DXPS subfamily. In terms of assembly, homodimer. Mg(2+) serves as cofactor. It depends on thiamine diphosphate as a cofactor.

The catalysed reaction is D-glyceraldehyde 3-phosphate + pyruvate + H(+) = 1-deoxy-D-xylulose 5-phosphate + CO2. The protein operates within metabolic intermediate biosynthesis; 1-deoxy-D-xylulose 5-phosphate biosynthesis; 1-deoxy-D-xylulose 5-phosphate from D-glyceraldehyde 3-phosphate and pyruvate: step 1/1. In terms of biological role, catalyzes the acyloin condensation reaction between C atoms 2 and 3 of pyruvate and glyceraldehyde 3-phosphate to yield 1-deoxy-D-xylulose-5-phosphate (DXP). This is 1-deoxy-D-xylulose-5-phosphate synthase from Clostridium botulinum (strain Eklund 17B / Type B).